We begin with the raw amino-acid sequence, 642 residues long: Threonine--tRNA ligase (642 aa).

In terms of domain architecture, TGS spans Met1–Thr61. The tract at residues Asp243 to Pro534 is catalytic. Zn(2+) is bound by residues Cys334, His385, and His511.

This sequence belongs to the class-II aminoacyl-tRNA synthetase family. In terms of assembly, homodimer. Requires Zn(2+) as cofactor.

Its subcellular location is the cytoplasm. It carries out the reaction tRNA(Thr) + L-threonine + ATP = L-threonyl-tRNA(Thr) + AMP + diphosphate + H(+). Functionally, catalyzes the attachment of threonine to tRNA(Thr) in a two-step reaction: L-threonine is first activated by ATP to form Thr-AMP and then transferred to the acceptor end of tRNA(Thr). Also edits incorrectly charged L-seryl-tRNA(Thr). The chain is Threonine--tRNA ligase from Shewanella sediminis (strain HAW-EB3).